The primary structure comprises 997 residues: Kinesin-like protein KIF19 (997 aa).

Residues 11–346 (QLTVALRIRP…LTYADRAKNI (336 aa)) enclose the Kinesin motor domain. Position 104–111 (104–111 (GPTGCGKT)) interacts with ATP. Residues 360 to 437 (HIAQYTSIIS…REQMDIRRQL (78 aa)) adopt a coiled-coil conformation. The span at 468–491 (RARKWRDEHRKETYGKDDSEKDSD) shows a compositional bias: basic and acidic residues. The interval 468–503 (RARKWRDEHRKETYGKDDSEKDSDTGDDQSDFIEPP) is disordered. A coiled-coil region spans residues 508–577 (ARETIQILEG…ELEIENTEMQ (70 aa)). 3 disordered regions span residues 662 to 690 (NLTAEENLQEPDSDQESVRTFGSDNRNPI), 792 to 811 (GDRLQPMKERSNLSVHSMSE), and 848 to 890 (GGGS…SRSF). 2 stretches are compositionally biased toward basic and acidic residues: residues 792-802 (GDRLQPMKERS) and 869-880 (QKLEKREESLEV). The stretch at 861 to 889 (HRTQKKQAQKLEKREESLEVKRRKKRSRS) forms a coiled coil.

This sequence belongs to the TRAFAC class myosin-kinesin ATPase superfamily. Kinesin family.

The protein resides in the cytoplasm. It localises to the cytoskeleton. It is found in the cell projection. The protein localises to the cilium. Its function is as follows. Plus end-directed microtubule-dependent motor protein that regulates the length of motile cilia by mediating depolymerization of microtubules at ciliary tips. The sequence is that of Kinesin-like protein KIF19 (kif19) from Xenopus laevis (African clawed frog).